A 199-amino-acid chain; its full sequence is Regulator of G-protein signaling 16 (199 aa).

Residues cysteine 2 and cysteine 12 are each lipidated (S-palmitoyl cysteine). Positions 64 to 180 (SFQSLLNSKN…LKSPAYRDLA (117 aa)) constitute an RGS domain. Residues tyrosine 167 and tyrosine 176 each carry the phosphotyrosine modification.

As to quaternary structure, interacts with GNAI1 and GNAQ. Interacts with GNAI3, GNAI3 and GNAO1. Post-translationally, palmitoylated on Cys-2 and/or Cys-12. Phosphorylated. Phosphorylation at Tyr-167 by EGFR enhances GTPase accelerating (GAP) activity toward GNAI1. Predominantly found in the retina. Some expression has been found in the liver.

The protein localises to the membrane. In terms of biological role, regulates G protein-coupled receptor signaling cascades. Inhibits signal transduction by increasing the GTPase activity of G protein alpha subunits, thereby driving them into their inactive GDP-bound form. Plays an important role in the phototransduction cascade by regulating the lifetime and effective concentration of activated transducin alpha. May regulate extra and intracellular mitogenic signals. This is Regulator of G-protein signaling 16 (Rgs16) from Rattus norvegicus (Rat).